The chain runs to 336 residues: NAC domain-containing protein 100 (336 aa).

Residues 16 to 166 (LPPGFRFHPT…EWVICRVFQK (151 aa)) form the NAC domain. The DNA-binding element occupies 113-172 (VGMKKTLVFYRGRAPKGQKTNWVMHEYRLEGKFSAHNLPKTAKNEWVICRVFQKSAGGKK). The disordered stretch occupies residues 313–336 (RRFDSQEDPSSSTGPVDLEPFWNY).

The protein resides in the nucleus. Its function is as follows. Binds to the promoter regions of genes involved in chlorophyll catabolic processes, such as NYC1, SGR1, SGR2 and PAO. The chain is NAC domain-containing protein 100 from Arabidopsis thaliana (Mouse-ear cress).